We begin with the raw amino-acid sequence, 464 residues long: tRNA-2-methylthio-N(6)-dimethylallyladenosine synthase (464 aa).

Residues 19 to 135 form the MTTase N-terminal domain; sequence GSYWITTFGC…LENLLERVDS (117 aa). The [4Fe-4S] cluster site is built by Cys28, Cys64, Cys98, Cys170, Cys174, and Cys177. One can recognise a Radical SAM core domain in the interval 156 to 393; the sequence is RDSTICGWVN…NELVEATSRK (238 aa). One can recognise a TRAM domain in the interval 396–464; that stretch reads QRYLNNTESV…SFSLSGQIYK (69 aa).

Belongs to the methylthiotransferase family. MiaB subfamily. In terms of assembly, monomer. [4Fe-4S] cluster serves as cofactor.

Its subcellular location is the cytoplasm. The enzyme catalyses N(6)-dimethylallyladenosine(37) in tRNA + (sulfur carrier)-SH + AH2 + 2 S-adenosyl-L-methionine = 2-methylsulfanyl-N(6)-dimethylallyladenosine(37) in tRNA + (sulfur carrier)-H + 5'-deoxyadenosine + L-methionine + A + S-adenosyl-L-homocysteine + 2 H(+). Catalyzes the methylthiolation of N6-(dimethylallyl)adenosine (i(6)A), leading to the formation of 2-methylthio-N6-(dimethylallyl)adenosine (ms(2)i(6)A) at position 37 in tRNAs that read codons beginning with uridine. This chain is tRNA-2-methylthio-N(6)-dimethylallyladenosine synthase, found in Prochlorococcus marinus (strain MIT 9515).